We begin with the raw amino-acid sequence, 121 residues long: uncharacterized protein (121 aa).

Positions 20–98 (NEVRTSQSEV…PYYHGSKAST (79 aa)) are disordered. The segment covering 35 to 51 (KKSDNGEKDEKEEKELN) has biased composition (basic and acidic residues).

This is an uncharacterized protein from Invertebrate iridescent virus 6 (IIV-6).